Reading from the N-terminus, the 468-residue chain is ATP synthase subunit beta (468 aa).

155 to 162 (GGAGVGKT) contacts ATP.

The protein belongs to the ATPase alpha/beta chains family. F-type ATPases have 2 components, CF(1) - the catalytic core - and CF(0) - the membrane proton channel. CF(1) has five subunits: alpha(3), beta(3), gamma(1), delta(1), epsilon(1). CF(0) has three main subunits: a(1), b(2) and c(9-12). The alpha and beta chains form an alternating ring which encloses part of the gamma chain. CF(1) is attached to CF(0) by a central stalk formed by the gamma and epsilon chains, while a peripheral stalk is formed by the delta and b chains.

It is found in the cell membrane. The catalysed reaction is ATP + H2O + 4 H(+)(in) = ADP + phosphate + 5 H(+)(out). Its function is as follows. Produces ATP from ADP in the presence of a proton gradient across the membrane. The catalytic sites are hosted primarily by the beta subunits. The protein is ATP synthase subunit beta of Streptococcus thermophilus (strain CNRZ 1066).